Consider the following 343-residue polypeptide: UDP-3-O-acylglucosamine N-acyltransferase 2 (343 aa).

Catalysis depends on His251, which acts as the Proton acceptor.

The protein belongs to the transferase hexapeptide repeat family. LpxD subfamily. In terms of assembly, homotrimer.

It catalyses the reaction a UDP-3-O-[(3R)-3-hydroxyacyl]-alpha-D-glucosamine + a (3R)-hydroxyacyl-[ACP] = a UDP-2-N,3-O-bis[(3R)-3-hydroxyacyl]-alpha-D-glucosamine + holo-[ACP] + H(+). It participates in bacterial outer membrane biogenesis; LPS lipid A biosynthesis. Functionally, catalyzes the N-acylation of UDP-3-O-acylglucosamine using 3-hydroxyacyl-ACP as the acyl donor. Is involved in the biosynthesis of lipid A, a phosphorylated glycolipid that anchors the lipopolysaccharide to the outer membrane of the cell. This chain is UDP-3-O-acylglucosamine N-acyltransferase 2, found in Legionella pneumophila (strain Lens).